Here is a 110-residue protein sequence, read N- to C-terminus: Transcription factor S (110 aa).

Zn(2+) contacts are provided by Cys-4, Cys-7, Cys-22, Cys-25, Cys-71, Cys-74, Cys-99, and Cys-102. The segment at Cys-4–Cys-25 adopts a C4-type zinc-finger fold. The TFIIS-type zinc finger occupies Thr-67 to Arg-107.

It belongs to the archaeal RpoM/eukaryotic RPA12/RPB9/RPC11 RNA polymerase family.

Induces RNA cleavage activity in the RNA polymerase. In its presence, the cleavage activity of the RNA polymerase truncates the RNA back to position +15 in a stepwise manner by releasing mainly dinucleotides from the 3'-end of the nascent RNA. The truncated RNAs are able to continue elongation. Involved in transcriptional proofreading and fidelity. Misincorporation of nucleotides during elongation of transcription leads to arrested elongation complexes which are rescued by TFS-promoted removal of a dinucleotide from the 3'-end. TFS is able to induce a cleavage resynthesis cycle in stalled elongation complexes (resulting from the next missing nucleotide or a reduced incorporation rate of a wrong nucleotide) preventing misincorporation and enabling proofreading in a post-incorporation manner. Pausing of elongation complexes is the main determinant of TFS-induced RNA cleavage. The sequence is that of Transcription factor S from Thermococcus celer.